Consider the following 439-residue polypeptide: MTAELRNLPHIASMAFNEPLMLEPAYARVFFCALAGQLGISSLTDAVSGDSLTAQEALATLALSGDDDGPRQARSYQVMNGIAVLPVSGTLVSRTRALQPYSGMTGYNGIIARLQQAASDPMVDGILLDMDTPGGMVAGAFDCADIIARVRDIKPVWALANDMNCSAGQLLASAASRRLVTQTARTGSIGVMMAHSNYGAALEKQGVEITLIYSGSHKVDGNPYSHLPDDVRETLQSRMDATRQMFAQKVSAYTGLSVQVVLDTEAAVYSGQEAIDAGLADELVNSTDAITVMRDALDARKSRLSGGRMTKETQSTTVSATASQADVTDVVPATEGENASAAQPDVNAQITAAVAAENSRIMGILNCEEAHGREEQARVLAETPGMTVKTARRILAAAPQSAQARSDTALDRLMQGAPAPLAAGNPASDAVNDLLNTPV.

S166 functions as the Nucleophile in the catalytic mechanism. Residues 303 to 327 are disordered; it reads RLSGGRMTKETQSTTVSATASQADV. Residues 313-327 show a composition bias toward low complexity; sequence TQSTTVSATASQADV.

The protein belongs to the peptidase S49 family. As to quaternary structure, capsid assembly protease interacts with capsid scaffolding protein Nu3. Capsid scaffolding protein Nu3 multimerizes and interacts with major capsid protein gpE.

The protein resides in the virion. The protein localises to the host cytoplasm. Functionally, assembly protease promotes icosahedral procapsid assembly. Autocatalytic cleavage may release the capsid scaffolding protein. The protease domain catalyzes the cleavage of the capsid scaffolding protein after complete procapsid formation. Assembly protease and cleavages products are evicted from the capsid before or during DNA packaging. In terms of biological role, scaffolding protein Nu3 promotes icosahedral procapsid assembly. Acts by binding the major capsid protein gpE and multimerizing in interaction with portal dodecamer, thereby placing gpE in a context facilitating icosahedral procapsid formation. Cleaved by capsid assembly protease C after capsid completion. The cleavages products are evicted from the capsid before or during DNA packaging. In Escherichia phage lambda (Bacteriophage lambda), this protein is Capsid assembly protease C (C).